Here is a 449-residue protein sequence, read N- to C-terminus: Putative F-box/FBD/LRR-repeat protein At3g49480 (449 aa).

In terms of domain architecture, F-box spans 11-59; that stretch reads EDRISSLPDDLLVKILLCVPTKDAAATTFLSKRWRFVWRMLPRLNYIET. LRR repeat units lie at residues 60–91, 153–180, 182–206, 235–260, 275–302, and 327–352; these read TSDV…WIDL, RLTL…DLFC, VYKD…KVTR, FRED…HIFD, VTVV…ALSP, and SEYD…LVDS. Residues 364–412 enclose the FBD domain; sequence WNQPSSIPRCLSSHLEIFEWDGYVGREDEKKIIRYILENSKYLKTAGIS.

The polypeptide is Putative F-box/FBD/LRR-repeat protein At3g49480 (Arabidopsis thaliana (Mouse-ear cress)).